The following is a 722-amino-acid chain: Tegument protein UL46 (722 aa).

The tract at residues 423 to 534 (RLAASGPPGG…AAAARPLAAQ (112 aa)) is disordered. Basic and acidic residues-rich tracts occupy residues 440–451 (CRDKIQRTRRDN) and 474–491 (HRED…DRGP). Positions 510–522 (PRLPPRNPAPPEQ) are enriched in pro residues. A compositionally biased stretch (low complexity) spans 523-534 (RPAAAARPLAAQ).

Belongs to the herpesviridae HHV-1 VP11/12 protein family. In terms of assembly, interacts with VP16. Interacts with host LCK, PIK3R1, SHC1 AND GRB2; these interactions promote the activation of the PI3K/AKT pathway. Interacts with host YWHAB. Interacts with ICP0; this interaction targets UL46 for degradation by the proteasome. Post-translationally, phosphorylated by host LCK. The phosphorylation seems to be lymphocyte-specific.

It localises to the virion tegument. The protein resides in the host cell membrane. Functionally, plays a role in the activation of the host PI3K/AKT pathway to promote cell survival. Interacts with and activates host LCK and thereby recruits downstream partners SHC1, GRB2 and PI3KR1 in order to activate the PI3K pathway by phosphorylating host AKT on its activating residues. This mechanism is inhibited by the viral protein US3 that instead promotes incorporation of UL46 into virions. The protein is Tegument protein UL46 of Homo sapiens (Human).